Reading from the N-terminus, the 406-residue chain is Cysteine desulfurase (406 aa).

Position 226 is an N6-(pyridoxal phosphate)lysine (Lys-226). The active-site Cysteine persulfide intermediate is Cys-364.

This sequence belongs to the class-V pyridoxal-phosphate-dependent aminotransferase family. Csd subfamily. In terms of assembly, homodimer. Interacts with SufE and the SufBCD complex composed of SufB, SufC and SufD. The interaction with SufE is required to mediate the direct transfer of the sulfur atom from the S-sulfanylcysteine. Requires pyridoxal 5'-phosphate as cofactor.

The protein resides in the cytoplasm. The catalysed reaction is (sulfur carrier)-H + L-cysteine = (sulfur carrier)-SH + L-alanine. The enzyme catalyses L-selenocysteine + AH2 = hydrogenselenide + L-alanine + A + H(+). The protein operates within cofactor biosynthesis; iron-sulfur cluster biosynthesis. Its function is as follows. Cysteine desulfurases mobilize the sulfur from L-cysteine to yield L-alanine, an essential step in sulfur metabolism for biosynthesis of a variety of sulfur-containing biomolecules. Component of the suf operon, which is activated and required under specific conditions such as oxidative stress and iron limitation. Acts as a potent selenocysteine lyase in vitro, that mobilizes selenium from L-selenocysteine. Selenocysteine lyase activity is however unsure in vivo. The sequence is that of Cysteine desulfurase from Salmonella gallinarum (strain 287/91 / NCTC 13346).